The sequence spans 144 residues: Large ribosomal subunit protein uL14 (144 aa).

It belongs to the universal ribosomal protein uL14 family. Part of the 50S ribosomal subunit. Forms a cluster with proteins L3 and L24e, part of which may contact the 16S rRNA in 2 intersubunit bridges.

Binds to 23S rRNA. Forms part of two intersubunit bridges in the 70S ribosome. The chain is Large ribosomal subunit protein uL14 from Pyrobaculum aerophilum (strain ATCC 51768 / DSM 7523 / JCM 9630 / CIP 104966 / NBRC 100827 / IM2).